Reading from the N-terminus, the 1170-residue chain is Short transient receptor potential channel 2 (1170 aa).

Topologically, residues 1–627 are cytoplasmic; that stretch reads MLMSLTDSKE…GWRGSTTIWK (627 aa). Disordered regions lie at residues 64–113, 142–231, and 322–342; these read SLSD…QTST, AHKA…QATG, and ESGS…VEES. A compositionally biased stretch (polar residues) spans 74–85; sequence SPGSSGLNQNSS. Positions 158–177 are enriched in basic and acidic residues; it reads GEPDSSHPERAEPRAEEPNR. ANK repeat units lie at residues 300–329, 346–376, 377–405, and 429–458; these read KFPP…DPSG, SWRE…DFRQ, IHEA…REKG, and PGVT…TIAR. The chain crosses the membrane as a helical span at residues 628-648; sequence LFVAFLIFLTMPFLCIGYWLA. Over 649–658 the chain is Extracellular; the sequence is PKSRLGRLLK. The helical transmembrane segment at 659-679 threads the bilayer; sequence IPVLKFLLHSASYLWFLIFLL. Residues 680–701 lie on the Cytoplasmic side of the membrane; sequence GESLVMETQLSTFKGRSQSVWE. The chain crosses the membrane as a helical span at residues 702–722; it reads TSLHMIWVTGFLWFECKEVWI. Over 723–737 the chain is Extracellular; sequence EGLRSYLLDWWNFLD. Residues 738 to 758 form a helical membrane-spanning segment; that stretch reads VVILSLYLASFALRLLLAGLA. Residues 759-788 are Cytoplasmic-facing; the sequence is YMHCRDASDSSTCRYFTTAERSEWRTEDPQ. Residues 789 to 809 form a helical membrane-spanning segment; the sequence is FLAEVLFAVTSMLSFTRLAYI. Topologically, residues 810 to 832 are extracellular; it reads LPAHESLGTLQISIGKMIDDMIR. A helical membrane pass occupies residues 833 to 853; it reads FMFILMIILTAFLCGLNNIYV. Residues 854–898 are Cytoplasmic-facing; sequence PYQETEKLGNFNETFQFLFWTMFGMEEHSVVDMPQFLVPEFVGRA. Residues 899–919 traverse the membrane as a helical segment; that stretch reads MYGIFTIVMVIVLLNMLIAMI. Over 920–1170 the chain is Extracellular; the sequence is TNSFQKIEDD…GEDLETKGES (251 aa). The stretch at 1030 to 1068 forms a coiled coil; it reads RREFEETRRKDLGNRLTELTKTVSRLQSEVASVQKTVAA. The interval 1118–1170 is disordered; the sequence is LEDSLDATGEAGTPASGESSSSSSAHVLVHREQEAEGAGDLPLGEDLETKGES.

The protein belongs to the transient receptor (TC 1.A.4) family. STrpC subfamily. TRPC2 sub-subfamily. Expressed exclusively in vomeronasal organ neurons (sensory microvilli).

It is found in the membrane. In terms of biological role, thought to form a receptor-activated calcium permeant cation channel. Probably is operated by a phosphatidylinositol second messenger system activated by receptor tyrosine kinases or G-protein coupled receptors. Is not activated by intracellular calcium store depletion. The protein is Short transient receptor potential channel 2 (Trpc2) of Rattus norvegicus (Rat).